A 572-amino-acid chain; its full sequence is O-fucosyltransferase 16 (572 aa).

A helical; Signal-anchor for type II membrane protein membrane pass occupies residues 17–37 (LLPLVIAVSLSLLILFAFLSF). 2 N-linked (GlcNAc...) asparagine glycosylation sites follow: asparagine 92 and asparagine 136. Substrate is bound at residue 274 to 276 (HLR). N-linked (GlcNAc...) asparagine glycans are attached at residues asparagine 446 and asparagine 506. The tract at residues 498–572 (ESRKLGKKNK…EPELEAMLSD (75 aa)) is disordered. Residues 521 to 541 (DQTEEDDPDWSEPDYEEEQSD) show a composition bias toward acidic residues. A glycan (N-linked (GlcNAc...) asparagine) is linked at asparagine 549. The span at 554-566 (DYDDPSTSDEPEL) shows a compositional bias: acidic residues.

Belongs to the glycosyltransferase GT106 family.

It localises to the membrane. It participates in glycan metabolism. This is O-fucosyltransferase 16 from Arabidopsis thaliana (Mouse-ear cress).